Consider the following 56-residue polypeptide: Single-pass membrane and coiled-coil domain-containing protein 4 homolog (56 aa).

The segment at 1-27 (MRQLPGKAAKETRKMKRERKQQNKEGH) is disordered. Residues 9–31 (AKETRKMKRERKQQNKEGHNRVV) adopt a coiled-coil conformation. Residues 30 to 50 (VVTVAIPVCLAVFVMLIVYVY) traverse the membrane as a helical segment.

This sequence belongs to the SMCO4 family.

Its subcellular location is the membrane. This is Single-pass membrane and coiled-coil domain-containing protein 4 homolog from Nematostella vectensis (Starlet sea anemone).